Here is a 178-residue protein sequence, read N- to C-terminus: Natriuretic and helokinestatin peptides (178 aa).

Positions methionine 1–alanine 25 are cleaved as a signal peptide. 5 consecutive propeptides follow at residues asparagine 26–asparagine 58, alanine 69–asparagine 73, alanine 85–asparagine 89, alanine 103–asparagine 112, and alanine 123–arginine 146. 2 disordered regions span residues alanine 69–lysine 107 and arginine 135–glycine 155. Cysteine 153 and cysteine 169 are joined by a disulfide.

The protein in the C-terminal section; belongs to the natriuretic peptide family. In terms of tissue distribution, expressed by the venom gland.

The protein resides in the secreted. Its function is as follows. Helokinestatins antagonize the vasodilatory actions of bradykinin at the B2 bradykinin receptor (BDKRB2), with helokinestatin-1 being the most potent antagonist. Functionally, exhibits hypotensive and vasodepressor activities, possibly by targeting natriuretic peptide receptors NPR1 and NPR2. This is Natriuretic and helokinestatin peptides from Heloderma suspectum cinctum (Banded Gila monster).